A 1153-amino-acid chain; its full sequence is Nitric oxide synthase, inducible (1153 aa).

Residues 23 to 27 (DINNN) carry the DINNN-motif; mediates interaction with SPSB1, SPSB2 and SPSB4 motif. 2 residues coordinate Zn(2+): Cys110 and Cys115. Residue Ser118 participates in (6R)-L-erythro-5,6,7,8-tetrahydrobiopterin binding. Cys200 is a binding site for heme b. Ser234 carries the post-translational modification Phosphoserine; by PKA. Gln263, Trp372, Tyr373, and Glu377 together coordinate L-arginine. 4 residues coordinate (6R)-L-erythro-5,6,7,8-tetrahydrobiopterin: Arg381, Ile462, Trp463, and Phe476. Tyr491 provides a ligand contact to heme b. The interval 515–535 (LKVLVKAVLFACMLMRKTMAS) is calmodulin-binding. The Flavodoxin-like domain maps to 539–677 (VTILFATETG…AFRSWAVQTF (139 aa)). Thr545, Glu546, Thr547, Lys549, and Ser550 together coordinate FMN. Tyr575 is subject to Phosphotyrosine. The residue at position 578 (Ser578) is a Phosphoserine; by PKA. The FMN site is built by Ser591, Thr592, Ser628, Arg633, Cys635, Glu661, and Gln665. In terms of domain architecture, FAD-binding FR-type spans 730–970 (KNVFTMRLKS…VRNASGFHLP (241 aa)). Arg750 provides a ligand contact to NADP(+). Residue His772 participates in FAD binding. Residue Ser892 is modified to Phosphoserine; by PKA. FAD contacts are provided by Arg906, Tyr908, Ser909, Thr924, and Ala926. Residue Thr929 participates in NADP(+) binding. Positions 930, 943, 944, and 945 each coordinate FAD. NADP(+)-binding residues include Thr984, Arg1017, Ser1046, Arg1047, Lys1053, Tyr1055, Gln1057, and Asp1090.

The protein belongs to the NOS family. Homodimer. Interacts with NHERF1. Interacts with GAPDH; induced by oxidatively-modified low-densitity lipoprotein (LDL(ox)). Interacts with S100A8 and S100A9 to form the iNOS-S100A8/9 transnitrosylase complex. Interacts with SPSB1, SPSB2 and SPSB4. Interacts with ELOC and CUL5 in the presence of SPSB1 or SPSB2 or SPSB4. Forms a complex with ASL, ASS1 and HSP90AA1; the complex regulates cell-autonomous L-arginine synthesis and citrulline recycling while channeling extracellular L-arginine to nitric oxide synthesis pathway. Heme b is required as a cofactor. Requires FAD as cofactor. FMN serves as cofactor. It depends on (6R)-L-erythro-5,6,7,8-tetrahydrobiopterin as a cofactor. Polyubiquitinated; mediated by SPSB1, SPSB2 and SPSB4, leading to proteasomal degradation. Expressed in the liver, retina, bone cells and airway epithelial cells of the lung. Not expressed in the platelets. Expressed in chondrocytes.

It is found in the cytoplasm. The protein resides in the cytosol. It carries out the reaction 2 L-arginine + 3 NADPH + 4 O2 + H(+) = 2 L-citrulline + 2 nitric oxide + 3 NADP(+) + 4 H2O. Regulated by calcium/calmodulin. Aspirin inhibits expression and function of this enzyme and effects may be exerted at the level of translational/post-translational modification and directly on the catalytic activity. In terms of biological role, produces nitric oxide (NO) which is a messenger molecule with diverse functions throughout the body. In macrophages, NO mediates tumoricidal and bactericidal actions. Also has nitrosylase activity and mediates cysteine S-nitrosylation of cytoplasmic target proteins such PTGS2/COX2. As component of the iNOS-S100A8/9 transnitrosylase complex involved in the selective inflammatory stimulus-dependent S-nitrosylation of GAPDH on 'Cys-247' implicated in regulation of the GAIT complex activity and probably multiple targets including ANXA5, EZR, MSN and VIM. Involved in inflammation, enhances the synthesis of pro-inflammatory mediators such as IL6 and IL8. The polypeptide is Nitric oxide synthase, inducible (Homo sapiens (Human)).